Here is a 363-residue protein sequence, read N- to C-terminus: MTMENKPADKPVGQNGLTYAQAGVDIDAGNLMVEKIKPLVRSTRRPGADGEIGGFGGLFDLKAAGFKDPVLVAANDGVGTKLKIAIDADKHDTVGIDLVAMCVNDLVVQGAEPLFFLDYFATGKLSPDQGVDIVAGIAEGCRQAGSALIGGETAEMPGMYRDGDYDLAGFAVGAAERDRLLPRGDIAEGDVILGLASSGVHSNGFSLVRRIVELSGLGWKSDAPFQPGATLGEALLTPTRIYVKPLLAAIRASDGIKALAHITGGGFPDNIPRVLPEGLAAEIDLESISVPAVFSWLAKTGGVEPNEMLRTFNCGIGMIAVVKPEKVEEVVAALAAEGEKVVTLGQMVKRDKDGVVYKGTLSL.

Belongs to the AIR synthase family.

It is found in the cytoplasm. It catalyses the reaction 2-formamido-N(1)-(5-O-phospho-beta-D-ribosyl)acetamidine + ATP = 5-amino-1-(5-phospho-beta-D-ribosyl)imidazole + ADP + phosphate + H(+). The protein operates within purine metabolism; IMP biosynthesis via de novo pathway; 5-amino-1-(5-phospho-D-ribosyl)imidazole from N(2)-formyl-N(1)-(5-phospho-D-ribosyl)glycinamide: step 2/2. This is Phosphoribosylformylglycinamidine cyclo-ligase from Brucella anthropi (strain ATCC 49188 / DSM 6882 / CCUG 24695 / JCM 21032 / LMG 3331 / NBRC 15819 / NCTC 12168 / Alc 37) (Ochrobactrum anthropi).